A 115-amino-acid polypeptide reads, in one-letter code: MLGAFNSTLARFGGLVHKVPWRLSQRRKYRHRQRLRAVDEVVDVLRTALQEKNQSCKRIESFVANHQPESQMSPKDKYTMFTRKTQGAGLQGFRKGVHKSPKWTRSTNRVNPTGF.

The transit peptide at 1–23 (MLGAFNSTLARFGGLVHKVPWRL) directs the protein to the mitochondrion. Residues 88–115 (AGLQGFRKGVHKSPKWTRSTNRVNPTGF) form a disordered region. Polar residues predominate over residues 103–115 (WTRSTNRVNPTGF).

It belongs to the mitochondrion-specific ribosomal protein mL60 family. In terms of assembly, component of the mitochondrial large ribosomal subunit (mt-LSU). Mature yeast 74S mitochondrial ribosomes consist of a small (37S) and a large (54S) subunit. The 37S small subunit contains a 15S ribosomal RNA (15S mt-rRNA) and at least 32 different proteins. The 54S large subunit contains a 21S rRNA (21S mt-rRNA) and at least 45 different proteins.

The protein resides in the mitochondrion. Component of the mitochondrial ribosome (mitoribosome), a dedicated translation machinery responsible for the synthesis of mitochondrial genome-encoded proteins, including at least some of the essential transmembrane subunits of the mitochondrial respiratory chain. The mitoribosomes are attached to the mitochondrial inner membrane and translation products are cotranslationally integrated into the membrane. This is Large ribosomal subunit protein mL60 (mrpl31) from Schizosaccharomyces pombe (strain 972 / ATCC 24843) (Fission yeast).